The primary structure comprises 606 residues: MRSNGCGELRSKHIASNVKLCGWVDRCRDHGGVIFIDLRDRSGTIQITVDPDQGTELFASAESLRNETVLQITGLVRPRPADAINSKLSTGEIEVLANGLEVLNPVTGNLPFTVSIHDEEPVKEELRLRHRHLDLRRERMSRNLQLRHTTIKTARHFLEDEGFIEVETPVLTRSTPEGARDYLVPSRVCSGEWFALPQSPQLFKQLLMVGGLERYYQVARCFRDEDLRADRQPEFTQLDIEMSFMDQEQILKLNERLIAAIWKAVKGIDLPLPFPRLTWHEAMDRYGTDRPDTRYGMELNDVSDILKDMGFKVFSGAIAAGGSVKCITVPNGNDLISNVRIKPGGDIFNEAQKAGAGGLAFIRVRDSDEIDSIGAIKDNLNSKQKAALLKQTGAKAGDLILFGAGKTATVNSALDRVRQFLGRELGLIPTDQDNKLWQFLWVVDFPMFELNAEENRLEALHHPFCAPNKDDLGDDPDAWMERLPQARAQAYDLVLNGLELGGGSLRIHNAELQRQVLQTIGLPLEEAKQQFGFLIDALEMGAPPHGGLAFGMDRIVMLLTGEDSIRDTIAFPKTQQARCLMTQAPAGVSNHQLEELHVESTWVDPE.

E177 contacts L-aspartate. An aspartate region spans residues 201-204; the sequence is QLFK. R223 is a binding site for L-aspartate. ATP is bound by residues 223 to 225 and Q232; that span reads RDE. Residue H461 participates in L-aspartate binding. Residue E499 coordinates ATP. R506 is an L-aspartate binding site. 551 to 554 is a binding site for ATP; sequence GMDR.

This sequence belongs to the class-II aminoacyl-tRNA synthetase family. Type 1 subfamily. In terms of assembly, homodimer.

It localises to the cytoplasm. It catalyses the reaction tRNA(Asx) + L-aspartate + ATP = L-aspartyl-tRNA(Asx) + AMP + diphosphate. In terms of biological role, aspartyl-tRNA synthetase with relaxed tRNA specificity since it is able to aspartylate not only its cognate tRNA(Asp) but also tRNA(Asn). Reaction proceeds in two steps: L-aspartate is first activated by ATP to form Asp-AMP and then transferred to the acceptor end of tRNA(Asp/Asn). This Prochlorococcus marinus (strain MIT 9313) protein is Aspartate--tRNA(Asp/Asn) ligase.